The following is a 478-amino-acid chain: Cytochrome c-552 (478 aa).

The first 26 residues, 1 to 26 (MTRIKINARRIFSLLIPFFFFTSVHA), serve as a signal peptide directing secretion. His-94 is a heme c binding site. Heme contacts are provided by Cys-122, Cys-125, and Lys-126. Residues Cys-160, Cys-163, His-164, Cys-209, Cys-212, and His-213 each contribute to the heme c site. Residues Glu-215, Tyr-216, Lys-261, and Gln-263 each coordinate Ca(2+). Position 216 (Tyr-216) interacts with substrate. His-264 is a binding site for substrate. Positions 275, 282, 285, 286, 301, 314, 317, 318, and 393 each coordinate heme c.

The protein belongs to the cytochrome c-552 family. It depends on Ca(2+) as a cofactor. Heme c is required as a cofactor.

It localises to the periplasm. The catalysed reaction is 6 Fe(III)-[cytochrome c] + NH4(+) + 2 H2O = 6 Fe(II)-[cytochrome c] + nitrite + 8 H(+). The protein operates within nitrogen metabolism; nitrate reduction (assimilation). Its function is as follows. Catalyzes the reduction of nitrite to ammonia, consuming six electrons in the process. The polypeptide is Cytochrome c-552 (Escherichia coli O9:H4 (strain HS)).